Consider the following 95-residue polypeptide: Large ribosomal subunit protein bL25 (95 aa).

It belongs to the bacterial ribosomal protein bL25 family. In terms of assembly, part of the 50S ribosomal subunit; part of the 5S rRNA/L5/L18/L25 subcomplex. Contacts the 5S rRNA. Binds to the 5S rRNA independently of L5 and L18.

Functionally, this is one of the proteins that binds to the 5S RNA in the ribosome where it forms part of the central protuberance. This is Large ribosomal subunit protein bL25 from Shewanella amazonensis (strain ATCC BAA-1098 / SB2B).